A 326-amino-acid chain; its full sequence is Tryptophan--tRNA ligase (326 aa).

ATP contacts are provided by residues 11–13 (QPT) and 19–20 (GN). The 'HIGH' region signature appears at 12–20 (PTGQIHLGN). Asp135 is an L-tryptophan binding site. ATP contacts are provided by residues 147-149 (GED), Val186, and 195-199 (KMSKS). The 'KMSKS' region motif lies at 195–199 (KMSKS).

Belongs to the class-I aminoacyl-tRNA synthetase family. As to quaternary structure, homodimer.

Its subcellular location is the cytoplasm. It catalyses the reaction tRNA(Trp) + L-tryptophan + ATP = L-tryptophyl-tRNA(Trp) + AMP + diphosphate + H(+). Functionally, catalyzes the attachment of tryptophan to tRNA(Trp). The polypeptide is Tryptophan--tRNA ligase (Helicobacter pylori (strain ATCC 700392 / 26695) (Campylobacter pylori)).